Consider the following 208-residue polypeptide: CD209 antigen-like protein E (208 aa).

Residues 1–16 lie on the Cytoplasmic side of the membrane; that stretch reads MRAPQMGSLGFLDKGH. The chain crosses the membrane as a helical; Signal-anchor for type II membrane protein span at residues 17–37; that stretch reads IPLVLQLLFLILFTGLLVAII. Over 38–208 the chain is Extracellular; it reads IQVSKMPSSE…KIATTCLSKW (171 aa). 3 disulfides stabilise this stretch: Cys-77-Cys-88, Cys-105-Cys-197, and Cys-176-Cys-189. The C-type lectin domain occupies 83–198; it reads FFNGNCYFFS…CEQRKFWICK (116 aa).

The protein resides in the membrane. Putative pathogen-recognition receptor. May mediate the endocytosis of pathogens which are subsequently degraded in lysosomal compartments. In Mus musculus (Mouse), this protein is CD209 antigen-like protein E (Cd209e).